We begin with the raw amino-acid sequence, 332 residues long: Mitoferrin-1 (332 aa).

3 Solcar repeats span residues 31–119 (ASLG…IKRS), 129–213 (NSHI…MQEH), and 220–314 (YRPE…FKYF). A run of 6 helical transmembrane segments spans residues 33–52 (LGTH…TVMY), 94–113 (GLNI…FACY), 131–150 (HIAN…AVMN), 188–207 (SYST…FITY), 222–241 (PETH…AVTT), and 289–308 (GIQA…WSVY).

This sequence belongs to the mitochondrial carrier (TC 2.A.29) family. As to expression, highly expressed in hematopoietic organs, Expressed in the intermediate cell mass (ICM), a tissue equivalent to the mammalian extraembryonic yolk-sac blood islands. Colocalizes with gata1.

It is found in the mitochondrion inner membrane. It catalyses the reaction Fe(2+)(in) = Fe(2+)(out). Functionally, mitochondrial iron transporter that specifically mediates iron uptake in developing erythroid cells, thereby playing an essential role in heme biosynthesis. The chain is Mitoferrin-1 (slc25a37) from Danio rerio (Zebrafish).